The sequence spans 263 residues: Small ribosomal subunit protein eS4, Y isoform 1 (263 aa).

Positions 42–104 (LPLIIFLRNR…TGEHFRLVYD (63 aa)) constitute an S4 RNA-binding domain.

This sequence belongs to the eukaryotic ribosomal protein eS4 family.

The protein is Small ribosomal subunit protein eS4, Y isoform 1 (RPS4Y1) of Monodelphis domestica (Gray short-tailed opossum).